We begin with the raw amino-acid sequence, 150 residues long: Monothiol glutaredoxin-5, mitochondrial (150 aa).

The N-terminal 29 residues, 1–29 (MFLPKFNPIRSFSPILRAKTLLRYQNRMY), are a transit peptide targeting the mitochondrion. Positions 35–140 (RKAIEDAIES…DLLEEAQALV (106 aa)) constitute a Glutaredoxin domain. A glutathione-binding site is contributed by Lys52. Position 60 (Cys60) interacts with [2Fe-2S] cluster. Glutathione-binding positions include 92-96 (REGIK), Ile104, and 117-118 (CD).

The protein belongs to the glutaredoxin family. Monothiol subfamily. As to quaternary structure, homodimer. Interacts with SSQ1. Interacts with BOL1.

Its subcellular location is the mitochondrion matrix. Functionally, monothiol glutaredoxin involved in mitochondrial iron-sulfur (Fe/S) cluster transfer. Receives 2Fe/2S clusters from scaffold protein ISU1 and mediates their transfer to apoproteins, to the 4Fe/FS cluster biosynthesis machinery, or export from mitochondrion. In Saccharomyces cerevisiae (strain ATCC 204508 / S288c) (Baker's yeast), this protein is Monothiol glutaredoxin-5, mitochondrial.